Here is a 216-residue protein sequence, read N- to C-terminus: Probable GTP-binding protein EngB (216 aa).

Residues 24-205 (QTPELAFVGR…WARIASAATD (182 aa)) enclose the EngB-type G domain. Residues 32–39 (GRSNVGKS), 59–63 (GRTRA), 86–89 (DLPG), 153–156 (TKMD), and 184–186 (FSA) contribute to the GTP site. Mg(2+) contacts are provided by Ser-39 and Thr-61.

It belongs to the TRAFAC class TrmE-Era-EngA-EngB-Septin-like GTPase superfamily. EngB GTPase family. The cofactor is Mg(2+).

Its function is as follows. Necessary for normal cell division and for the maintenance of normal septation. In Anaeromyxobacter sp. (strain Fw109-5), this protein is Probable GTP-binding protein EngB.